Here is a 393-residue protein sequence, read N- to C-terminus: Probable acetyl-CoA acyltransferase (393 aa).

Cys-88 acts as the Acyl-thioester intermediate in catalysis. Residues His-349 and Cys-378 each act as proton acceptor in the active site.

This sequence belongs to the thiolase-like superfamily. Thiolase family.

The protein localises to the cytoplasm. It carries out the reaction 2 acetyl-CoA = acetoacetyl-CoA + CoA. This chain is Probable acetyl-CoA acyltransferase, found in Staphylococcus aureus (strain MSSA476).